Consider the following 248-residue polypeptide: Type III pantothenate kinase (248 aa).

Position 8-15 (8-15 (DAGNTRTK)) interacts with ATP. Substrate is bound by residues Tyr87 and 94–97 (GVDR). Asp96 serves as the catalytic Proton acceptor. Thr119 is an ATP binding site. Thr173 contacts substrate.

It belongs to the type III pantothenate kinase family. Homodimer. Requires NH4(+) as cofactor. It depends on K(+) as a cofactor.

The protein localises to the cytoplasm. The catalysed reaction is (R)-pantothenate + ATP = (R)-4'-phosphopantothenate + ADP + H(+). Its pathway is cofactor biosynthesis; coenzyme A biosynthesis; CoA from (R)-pantothenate: step 1/5. Its function is as follows. Catalyzes the phosphorylation of pantothenate (Pan), the first step in CoA biosynthesis. The sequence is that of Type III pantothenate kinase from Methylobacillus flagellatus (strain ATCC 51484 / DSM 6875 / VKM B-1610 / KT).